A 138-amino-acid polypeptide reads, in one-letter code: Large ribosomal subunit protein uL16 (138 aa).

Residues 1 to 29 (MSLLQPRKVKWRKPQKGRTKGKATRRNQV) are disordered. Positions 7 to 25 (RKVKWRKPQKGRTKGKATR) are enriched in basic residues.

Belongs to the universal ribosomal protein uL16 family. In terms of assembly, part of the 50S ribosomal subunit.

In terms of biological role, binds 23S rRNA and is also seen to make contacts with the A and possibly P site tRNAs. In Sulfurihydrogenibium sp. (strain YO3AOP1), this protein is Large ribosomal subunit protein uL16.